The following is a 300-amino-acid chain: U1 small nuclear ribonucleoprotein 70 kDa homolog (300 aa).

Residues 107–198 (RTIFIGRLPY…RTVKYFKPRR (92 aa)) enclose the RRM domain. Disordered regions lie at residues 204 to 248 (GGRG…AYSA) and 263 to 300 (NRPL…APDY). Low complexity predominate over residues 265 to 279 (PLLSAATPTAAVTSV).

As to quaternary structure, component of the spliceosome, where it is associated with snRNP U1. Binds stem loop I of U1 snRNA. Interacts with mRNA.

It localises to the nucleus. Involved in nuclear mRNA splicing. The chain is U1 small nuclear ribonucleoprotein 70 kDa homolog (SNP1) from Saccharomyces cerevisiae (strain ATCC 204508 / S288c) (Baker's yeast).